A 235-amino-acid chain; its full sequence is Small ribosomal subunit protein uS2c (235 aa).

The protein belongs to the universal ribosomal protein uS2 family.

The protein resides in the plastid. It is found in the chloroplast. The chain is Small ribosomal subunit protein uS2c (rps2) from Adiantum capillus-veneris (Maidenhair fern).